We begin with the raw amino-acid sequence, 399 residues long: Cytochrome P450 FAS1 (399 aa).

C349 provides a ligand contact to heme.

The protein belongs to the cytochrome P450 family. The cofactor is heme.

Its subcellular location is the cytoplasm. Its function is as follows. May be involved in the biosynthesis of cytokinin phytohormones and in host plant fasciation (leafy gall). The protein is Cytochrome P450 FAS1 (fas1) of Rhodococcoides fascians (Rhodococcus fascians).